The sequence spans 106 residues: Protein RnfH (106 aa).

This sequence belongs to the UPF0125 (RnfH) family.

This is Protein RnfH from Ectopseudomonas mendocina (strain ymp) (Pseudomonas mendocina).